We begin with the raw amino-acid sequence, 91 residues long: MALNKEDKKDIFLTYSAKNVAQDTGSPESQIALFSNRITYLTEHLKQYPKDKASRLGLIKLVGKRKKQLTYLQNTAIERYRDIIVKLGIRK.

The protein belongs to the universal ribosomal protein uS15 family. In terms of assembly, part of the 30S ribosomal subunit. Forms a bridge to the 50S subunit in the 70S ribosome, contacting the 23S rRNA.

Functionally, one of the primary rRNA binding proteins, it binds directly to 16S rRNA where it helps nucleate assembly of the platform of the 30S subunit by binding and bridging several RNA helices of the 16S rRNA. Its function is as follows. Forms an intersubunit bridge (bridge B4) with the 23S rRNA of the 50S subunit in the ribosome. This Amoebophilus asiaticus (strain 5a2) protein is Small ribosomal subunit protein uS15.